Reading from the N-terminus, the 357-residue chain is NADH-quinone oxidoreductase subunit H (357 aa).

A run of 8 helical transmembrane segments spans residues 20 to 40 (WLLVWTLVKIVAVVLPLMGCV), 92 to 112 (ALFVIAPIMTIMPALAAWAVI), 127 to 147 (LLFVMAITSLEVYGVIVAGWA), 165 to 185 (ISYEIAMGFVLVIVLMVSGSL), 203 to 223 (GLTFLSWNWLPLLPMFVIYII), 259 to 279 (FFLAEYANMILISMMATLMFL), 294 to 314 (IPGWIWLGIKTLFVVTLFIWF), and 329 to 349 (LGWKVFIPLTLVYLLIVAIWM).

This sequence belongs to the complex I subunit 1 family. As to quaternary structure, NDH-1 is composed of 14 different subunits. Subunits NuoA, H, J, K, L, M, N constitute the membrane sector of the complex.

The protein localises to the cell inner membrane. It carries out the reaction a quinone + NADH + 5 H(+)(in) = a quinol + NAD(+) + 4 H(+)(out). Its function is as follows. NDH-1 shuttles electrons from NADH, via FMN and iron-sulfur (Fe-S) centers, to quinones in the respiratory chain. The immediate electron acceptor for the enzyme in this species is believed to be ubiquinone. Couples the redox reaction to proton translocation (for every two electrons transferred, four hydrogen ions are translocated across the cytoplasmic membrane), and thus conserves the redox energy in a proton gradient. This subunit may bind ubiquinone. The sequence is that of NADH-quinone oxidoreductase subunit H from Herminiimonas arsenicoxydans.